A 63-amino-acid chain; its full sequence is Cypmaclein (63 aa).

The protein belongs to the GASA family. In terms of tissue distribution, expressed in pollen (at protein level).

The chain is Cypmaclein from Cupressus sempervirens (Italian cypress).